The primary structure comprises 328 residues: Arabinose 5-phosphate isomerase KdsD (328 aa).

The SIS domain maps to 42–184; it reads CEKMFWCKGK…AVALLKARGF (143 aa). Residues 75–76, His-82, His-88, 114–123, 148–150, Thr-222, and Asp-275 contribute to the substrate site; these read GT, ALIPVLKRLH, and KVA. Zn(2+) is bound at residue His-82. The 59-residue stretch at 210–268 folds into the CBS 1 domain; sequence MHTGDEIPHVKKTASLRDALLEVTRKNLGMTVICDDNMMIEGIFTDGDLRRVFDMGVDV. In terms of domain architecture, CBS 2 spans 277–328; that stretch reads MTPGGIRVRPGILAVEALNLMQSRHITSVMVADGDHLLGVLHMHDLLRAGVV.

This sequence belongs to the SIS family. GutQ/KpsF subfamily. In terms of assembly, homotetramer.

The enzyme catalyses D-arabinose 5-phosphate = D-ribulose 5-phosphate. It participates in carbohydrate biosynthesis; 3-deoxy-D-manno-octulosonate biosynthesis; 3-deoxy-D-manno-octulosonate from D-ribulose 5-phosphate: step 1/3. It functions in the pathway bacterial outer membrane biogenesis; lipopolysaccharide biosynthesis. Functionally, involved in the biosynthesis of 3-deoxy-D-manno-octulosonate (KDO), a unique 8-carbon sugar component of lipopolysaccharides (LPSs). Catalyzes the reversible aldol-ketol isomerization between D-ribulose 5-phosphate (Ru5P) and D-arabinose 5-phosphate (A5P). This is Arabinose 5-phosphate isomerase KdsD (kdsD) from Escherichia coli O6:H1 (strain CFT073 / ATCC 700928 / UPEC).